The chain runs to 97 residues: Late transcription unit B protein (97 aa).

The tract at residues 24-45 (SIEGETKKEHKHHYSTASKEKE) is disordered.

The chain is Late transcription unit B protein (ltuB) from Chlamydia trachomatis serovar D (strain ATCC VR-885 / DSM 19411 / UW-3/Cx).